We begin with the raw amino-acid sequence, 757 residues long: Catalase-peroxidase (757 aa).

A disordered region spans residues 1–28 (MENQSNDISKCPFHNGSMDNQAASGTKN). Residues 17–28 (SMDNQAASGTKN) show a composition bias toward polar residues. The segment at residues 100 to 247 (WHSAGTYRVH…LAAVQMGLIY (148 aa)) is a cross-link (tryptophyl-tyrosyl-methioninium (Trp-Tyr) (with M-273)). The Proton acceptor role is filled by His101. The tryptophyl-tyrosyl-methioninium (Tyr-Met) (with W-100) cross-link spans 247-273 (YVNPEGPDGNPDPILAAKDIRDTFGRM). Heme b is bound at residue His288.

Belongs to the peroxidase family. Peroxidase/catalase subfamily. In terms of assembly, homodimer or homotetramer. The cofactor is heme b. Post-translationally, formation of the three residue Trp-Tyr-Met cross-link is important for the catalase, but not the peroxidase activity of the enzyme.

It carries out the reaction H2O2 + AH2 = A + 2 H2O. The enzyme catalyses 2 H2O2 = O2 + 2 H2O. Functionally, bifunctional enzyme with both catalase and broad-spectrum peroxidase activity. In Flavobacterium johnsoniae (strain ATCC 17061 / DSM 2064 / JCM 8514 / BCRC 14874 / CCUG 350202 / NBRC 14942 / NCIMB 11054 / UW101) (Cytophaga johnsonae), this protein is Catalase-peroxidase.